Consider the following 692-residue polypeptide: Serine/threonine-protein phosphatase PP-Z1 (692 aa).

2 disordered regions span residues 1–309 and 321–357; these read MGNS…DIEN and ENVNDKNNNITDSKKDPNEEFNDIMQSSGNKNAPKKF. Gly-2 carries N-myristoyl glycine lipidation. Composition is skewed to low complexity over residues 32–41, 49–69, and 91–122; these read SHSVKSAKSN, SLPSSSTTNTNSNVPDPSTPS, and SSSHSHSNSQNELLTTPSSSSTKRPSTSRRSS. Ser-49 carries the post-translational modification Phosphoserine. A compositionally biased stretch (acidic residues) spans 170–179; it reads LTDDDNDDKD. Residue Thr-171 is modified to Phosphothreonine. Over residues 190-204 the composition is skewed to low complexity; that stretch reads RSSNSRPSSIRSGSV. Over residues 207 to 216 the composition is skewed to basic and acidic residues; sequence RKSDVTHEEP. Phosphoserine is present on residues Ser-209 and Ser-222. Polar residues-rich tracts occupy residues 217–229 and 251–267; these read NNGSYSSNNQENY and FGSDGNTAYSTPLNSPG. Thr-261 carries the post-translational modification Phosphothreonine. Ser-265 carries the post-translational modification Phosphoserine. Low complexity predominate over residues 280–289; that stretch reads TSNSTSSLNH. Over residues 291–303 the composition is skewed to basic and acidic residues; it reads SSRDIYPSKHISN. The segment covering 321-331 has biased composition (polar residues); it reads ENVNDKNNNIT. Mn(2+) contacts are provided by Asp-419, His-421, Asp-447, and Asn-479. The active-site Proton donor is the His-480. The Mn(2+) site is built by His-528 and His-603. The interval 672–692 is disordered; sequence LANQQQQMMETSITNDNESQQ. Over residues 673–692 the composition is skewed to polar residues; that stretch reads ANQQQQMMETSITNDNESQQ. Ser-690 is subject to Phosphoserine.

The protein belongs to the PPP phosphatase family. PP-Z subfamily. Interacts with SIS2 and VHS3, which regulate its activity. Requires Mn(2+) as cofactor.

The catalysed reaction is O-phospho-L-seryl-[protein] + H2O = L-seryl-[protein] + phosphate. It catalyses the reaction O-phospho-L-threonyl-[protein] + H2O = L-threonyl-[protein] + phosphate. Its activity is regulated as follows. Inhibited by the regulatory subunits VHS3 and SIS2. Its function is as follows. Essential for the maintenance of cell size and integrity in response to osmotic stress. This is Serine/threonine-protein phosphatase PP-Z1 (PPZ1) from Saccharomyces cerevisiae (strain ATCC 204508 / S288c) (Baker's yeast).